The primary structure comprises 400 residues: Probable peptidoglycan glycosyltransferase FtsW (400 aa).

Residues 1 to 24 lie on the Cytoplasmic side of the membrane; it reads MSTGSLPLGLPSRDSLDGLRNSVD. A helical transmembrane segment spans residues 25–45; that stretch reads LPLLAAAALLLGLGLIMVASA. Over 46-63 the chain is Periplasmic; sequence SMDLGERYYGNTWHFFQR. Residues 64-84 form a helical membrane-spanning segment; sequence QVLFAAIGLALATVMWAIPLE. Over 85 to 88 the chain is Cytoplasmic; that stretch reads RWER. A helical membrane pass occupies residues 89 to 109; the sequence is AGPWLLILVMVLLIAVLLPGV. Residues 110-118 lie on the Periplasmic side of the membrane; that stretch reads GRTVNGATR. The chain crosses the membrane as a helical span at residues 119–139; that stretch reads WIPIGMFNLQVAEPVKLLVVM. Over 140–153 the chain is Cytoplasmic; that stretch reads YLAGYIVRHYSALR. The chain crosses the membrane as a helical span at residues 154 to 174; the sequence is LHLRGFVRPLVVLGFGTVLLL. The Periplasmic segment spans residues 175-177; it reads LQP. Residues 178–198 form a helical membrane-spanning segment; the sequence is DFGGAAIMLAIGMGMLFLAGA. Lys-199 is a topological domain (cytoplasmic). Residues 200–220 form a helical membrane-spanning segment; that stretch reads LWQFAALGATIAVGMAFVAVA. Topologically, residues 221 to 278 are periplasmic; that stretch reads APYRVARLTAFLDPWQDPFATGFQLTQSLIAIGSGGWFGTGLGNSVQKLFYLPEAHND. The helical transmembrane segment at 279–299 threads the bilayer; it reads FLFAVFAEEFGFIGVLALIAL. Topologically, residues 300–324 are cytoplasmic; it reads FAVVVWRCVKIGLWAERAGHAFGSH. The helical transmembrane segment at 325–345 threads the bilayer; that stretch reads LAFGVAIWLALQSALNLAVNM. Residues 346-354 lie on the Periplasmic side of the membrane; that stretch reads GLLPTKGMT. A helical membrane pass occupies residues 355 to 375; sequence LPFLSYGGSSLIVTLMAIGLV. Over 376–400 the chain is Cytoplasmic; it reads MRVYREAQIPAPRQSTPPRRKRGQA.

This sequence belongs to the SEDS family. FtsW subfamily.

The protein resides in the cell inner membrane. The enzyme catalyses [GlcNAc-(1-&gt;4)-Mur2Ac(oyl-L-Ala-gamma-D-Glu-L-Lys-D-Ala-D-Ala)](n)-di-trans,octa-cis-undecaprenyl diphosphate + beta-D-GlcNAc-(1-&gt;4)-Mur2Ac(oyl-L-Ala-gamma-D-Glu-L-Lys-D-Ala-D-Ala)-di-trans,octa-cis-undecaprenyl diphosphate = [GlcNAc-(1-&gt;4)-Mur2Ac(oyl-L-Ala-gamma-D-Glu-L-Lys-D-Ala-D-Ala)](n+1)-di-trans,octa-cis-undecaprenyl diphosphate + di-trans,octa-cis-undecaprenyl diphosphate + H(+). Its pathway is cell wall biogenesis; peptidoglycan biosynthesis. Peptidoglycan polymerase that is essential for cell division. The chain is Probable peptidoglycan glycosyltransferase FtsW from Thioalkalivibrio sp. (strain K90mix).